Here is a 221-residue protein sequence, read N- to C-terminus: MNVRIDQSWKNKLDNEFEKEYFENLITYIKDEYSEHKCFPPGNEIFAAFDYSSFEDTKVVILGQDPYHGIGQANGLCFSVKDGVAFPPSLINIFKEIESDLNKPIPSTGNLERWANQGVLLLNATLSVRAHQAGSHQNKGWETFTDQVIRIVSETKENVVFLLWGGYAKKKTKLIDNSKHLILTSGHPSPLSANRGYWFGNKHFSKTNEYLKSQGEQPIEW.

The Proton acceptor role is filled by Asp-65.

It belongs to the uracil-DNA glycosylase (UDG) superfamily. UNG family.

The protein resides in the cytoplasm. The catalysed reaction is Hydrolyzes single-stranded DNA or mismatched double-stranded DNA and polynucleotides, releasing free uracil.. Its function is as follows. Excises uracil residues from the DNA which can arise as a result of misincorporation of dUMP residues by DNA polymerase or due to deamination of cytosine. The protein is Uracil-DNA glycosylase of Christiangramia forsetii (strain DSM 17595 / CGMCC 1.15422 / KT0803) (Gramella forsetii).